Reading from the N-terminus, the 546-residue chain is Chaperonin GroEL (546 aa).

ATP is bound by residues 30–33 (TLGP), Lys-51, 87–91 (DGTTT), Gly-415, 479–481 (NAA), and Asp-495. Residues 526–546 (KKDEPAMPAGGGMGGMGGMDF) are disordered. Positions 534-546 (AGGGMGGMGGMDF) are enriched in gly residues.

Belongs to the chaperonin (HSP60) family. Forms a cylinder of 14 subunits composed of two heptameric rings stacked back-to-back. Interacts with the co-chaperonin GroES.

It localises to the cytoplasm. It catalyses the reaction ATP + H2O + a folded polypeptide = ADP + phosphate + an unfolded polypeptide.. Together with its co-chaperonin GroES, plays an essential role in assisting protein folding. The GroEL-GroES system forms a nano-cage that allows encapsulation of the non-native substrate proteins and provides a physical environment optimized to promote and accelerate protein folding. This Xanthomonas euvesicatoria pv. vesicatoria (strain 85-10) (Xanthomonas campestris pv. vesicatoria) protein is Chaperonin GroEL.